The primary structure comprises 387 residues: Cystathionine beta-lyase (387 aa).

An N6-(pyridoxal phosphate)lysine modification is found at lysine 204.

This sequence belongs to the trans-sulfuration enzymes family. In terms of assembly, homotetramer. Pyridoxal 5'-phosphate serves as cofactor.

The protein localises to the cytoplasm. The catalysed reaction is L,L-cystathionine + H2O = L-homocysteine + pyruvate + NH4(+). It catalyses the reaction an S-substituted L-cysteine + H2O = a thiol + pyruvate + NH4(+). It functions in the pathway amino-acid biosynthesis; L-methionine biosynthesis via de novo pathway; L-homocysteine from L-cystathionine: step 1/1. In terms of biological role, catalyzes the cleavage of cystathionine to homocysteine, pyruvate and ammonia during methionine biosynthesis. This chain is Cystathionine beta-lyase (metC), found in Coxiella burnetii (strain RSA 493 / Nine Mile phase I).